Here is a 514-residue protein sequence, read N- to C-terminus: 2,3-bisphosphoglycerate-independent phosphoglycerate mutase (514 aa).

Residues D14 and S64 each contribute to the Mn(2+) site. S64 serves as the catalytic Phosphoserine intermediate. Residues H125, 155-156 (RD), R187, R193, 263-266 (RADR), and K336 contribute to the substrate site. Residues D403, H407, D444, H445, and H463 each contribute to the Mn(2+) site.

This sequence belongs to the BPG-independent phosphoglycerate mutase family. As to quaternary structure, monomer. It depends on Mn(2+) as a cofactor.

The catalysed reaction is (2R)-2-phosphoglycerate = (2R)-3-phosphoglycerate. Its pathway is carbohydrate degradation; glycolysis; pyruvate from D-glyceraldehyde 3-phosphate: step 3/5. Catalyzes the interconversion of 2-phosphoglycerate and 3-phosphoglycerate. In Shigella flexneri, this protein is 2,3-bisphosphoglycerate-independent phosphoglycerate mutase.